We begin with the raw amino-acid sequence, 66 residues long: DNA-directed RNA polymerase subunit omega (66 aa).

It belongs to the RNA polymerase subunit omega family. As to quaternary structure, the RNAP catalytic core consists of 2 alpha, 1 beta, 1 beta' and 1 omega subunit. When a sigma factor is associated with the core the holoenzyme is formed, which can initiate transcription.

The enzyme catalyses RNA(n) + a ribonucleoside 5'-triphosphate = RNA(n+1) + diphosphate. In terms of biological role, promotes RNA polymerase assembly. Latches the N- and C-terminal regions of the beta' subunit thereby facilitating its interaction with the beta and alpha subunits. In Clostridium botulinum (strain Eklund 17B / Type B), this protein is DNA-directed RNA polymerase subunit omega.